The sequence spans 67 residues: Theromin (67 aa).

In terms of domain architecture, Antistasin-like spans 2–27 (CENTECPRACPGEYEFDEDGCNTCVC).

As to quaternary structure, homodimer. Post-translationally, eight disulfide bonds are present.

Its subcellular location is the secreted. Functionally, potent thrombin-specific inhibitor. This chain is Theromin, found in Theromyzon tessulatum (Duck leech).